A 97-amino-acid polypeptide reads, in one-letter code: Aspartyl/glutamyl-tRNA(Asn/Gln) amidotransferase subunit C (97 aa).

This sequence belongs to the GatC family. In terms of assembly, heterotrimer of A, B and C subunits.

It carries out the reaction L-glutamyl-tRNA(Gln) + L-glutamine + ATP + H2O = L-glutaminyl-tRNA(Gln) + L-glutamate + ADP + phosphate + H(+). It catalyses the reaction L-aspartyl-tRNA(Asn) + L-glutamine + ATP + H2O = L-asparaginyl-tRNA(Asn) + L-glutamate + ADP + phosphate + 2 H(+). Allows the formation of correctly charged Asn-tRNA(Asn) or Gln-tRNA(Gln) through the transamidation of misacylated Asp-tRNA(Asn) or Glu-tRNA(Gln) in organisms which lack either or both of asparaginyl-tRNA or glutaminyl-tRNA synthetases. The reaction takes place in the presence of glutamine and ATP through an activated phospho-Asp-tRNA(Asn) or phospho-Glu-tRNA(Gln). This Anaeromyxobacter sp. (strain K) protein is Aspartyl/glutamyl-tRNA(Asn/Gln) amidotransferase subunit C.